We begin with the raw amino-acid sequence, 265 residues long: Apolipoprotein A-I (265 aa).

The N-terminal stretch at 1–20 (METKAVVLTLAVLFLTGSQA) is a signal peptide. A run of 2 repeats spans residues 69-90 (LKIL…EQMR) and 91-112 (PIFQ…EVLN). Positions 69 to 265 (LKILDNWDTL…DEATKKLNSQ (197 aa)) are 10 X approximate tandem repeats. One copy of the 3; half-length repeat lies at 113 to 123 (KDLEELKQKVQ). Repeat copies occupy residues 124–145 (PYLD…QKMA), 146–167 (PLGT…EKLG), 168–189 (PLGE…TQLA), 190–209 (PYTE…LKES), and 210–230 (NLAE…ENAK). The residue at position 195 (methionine 195) is a Methionine sulfoxide. A 9; half-length repeat occupies 231–241 (PALEDFRQGLM). A Methionine sulfoxide modification is found at methionine 241. Repeat unit 10 spans residues 242–265 (PVLEGFQKSVLAALDEATKKLNSQ).

Belongs to the apolipoprotein A1/A4/E family. In terms of assembly, homodimer. Interacts with APOA1BP and CLU. Component of a sperm activating protein complex (SPAP), consisting of APOA1, an immunoglobulin heavy chain, an immunoglobulin light chain and albumin. Interacts with NDRG1. Interacts with SCGB3A2. Interacts with NAXE and YJEFN3. In terms of processing, glycosylated. Post-translationally, palmitoylated. Phosphorylation sites are present in the extracellular medium. As to expression, major protein of plasma HDL, also found in chylomicrons.

Its subcellular location is the secreted. Functionally, participates in the reverse transport of cholesterol from tissues to the liver for excretion by promoting cholesterol efflux from tissues and by acting as a cofactor for the lecithin cholesterol acyltransferase (LCAT). As part of the SPAP complex, activates spermatozoa motility. The polypeptide is Apolipoprotein A-I (APOA1) (Orycteropus afer (Aardvark)).